We begin with the raw amino-acid sequence, 333 residues long: DnaJ homolog subfamily C member 25 homolog (333 aa).

Residues 8–28 (LVLLALLPTMALGLLEGLYCG) form a helical membrane-spanning segment. Residues 31–99 (NCYDVLGVTR…ESRTDYDYML (69 aa)) form the J domain. The helical transmembrane segment at 123-143 (VRVVIVVVLTIVSVIQYYSGW) threads the bilayer. Positions 158–208 (KYRNQALEIARDEIQEKIQKKGKNRMSKNDQRDELERIIRRVIEEKMDVKG) form a coiled coil. A helical membrane pass occupies residues 218–238 (VLWVQLIICPYTILSFIVWHA).

Belongs to the DNAJC25 family.

It is found in the membrane. In Drosophila melanogaster (Fruit fly), this protein is DnaJ homolog subfamily C member 25 homolog.